The following is a 442-amino-acid chain: Divalent metal cation transporter MntH (442 aa).

11 helical membrane passes run 29 to 49, 62 to 82, 106 to 126, 135 to 155, 166 to 186, 209 to 229, 258 to 278, 295 to 315, 347 to 367, 372 to 392, and 413 to 433; these read MLAY…PGNW, TLLT…SLCV, FCLW…ELLG, FVIP…VLLF, ALVI…ILFS, MLYI…LYLH, FALS…AATF, LLSP…ALLA, LITR…FGEN, LIVL…IPLV, and LAWL…LQSL.

This sequence belongs to the NRAMP family.

It is found in the cell inner membrane. Its function is as follows. H(+)-stimulated, divalent metal cation uptake system. In Nostoc sp. (strain PCC 7120 / SAG 25.82 / UTEX 2576), this protein is Divalent metal cation transporter MntH.